The primary structure comprises 41 residues: Large ribosomal subunit protein bL36 (41 aa).

The protein belongs to the bacterial ribosomal protein bL36 family.

This Maricaulis maris (strain MCS10) (Caulobacter maris) protein is Large ribosomal subunit protein bL36.